Consider the following 156-residue polypeptide: MNLNATLIGELIAFTVFVLFCMKFVWPPLNGAIEARQKKIEDGLAASDRAEKDLELAQKKAAEQLKDAKVQAADIIDQAKKRAVLIVDEETVRGQQEREKIIAQGHSEIESERNRVTEELRKQVATLAVVGAQRILEREINQAAHSDIVEKLVAEL.

Residues Leu-7–Pro-27 form a helical membrane-spanning segment.

It belongs to the ATPase B chain family. As to quaternary structure, F-type ATPases have 2 components, F(1) - the catalytic core - and F(0) - the membrane proton channel. F(1) has five subunits: alpha(3), beta(3), gamma(1), delta(1), epsilon(1). F(0) has three main subunits: a(1), b(2) and c(10-14). The alpha and beta chains form an alternating ring which encloses part of the gamma chain. F(1) is attached to F(0) by a central stalk formed by the gamma and epsilon chains, while a peripheral stalk is formed by the delta and b chains.

It localises to the cell inner membrane. Its function is as follows. F(1)F(0) ATP synthase produces ATP from ADP in the presence of a proton or sodium gradient. F-type ATPases consist of two structural domains, F(1) containing the extramembraneous catalytic core and F(0) containing the membrane proton channel, linked together by a central stalk and a peripheral stalk. During catalysis, ATP synthesis in the catalytic domain of F(1) is coupled via a rotary mechanism of the central stalk subunits to proton translocation. Functionally, component of the F(0) channel, it forms part of the peripheral stalk, linking F(1) to F(0). The protein is ATP synthase subunit b of Pseudoalteromonas translucida (strain TAC 125).